Here is a 115-residue protein sequence, read N- to C-terminus: MKVTDVRMRKLVTDSRMKALASITLDEAFVIHDLRVIDGNNGLFVAMPSKRTSDGEFRDIAHPINSEMRQEIQEAVMKVYDETEAVEPGTIATSEVSSQLEESDSDKTLSEDLKA.

The disordered stretch occupies residues 88-115; sequence PGTIATSEVSSQLEESDSDKTLSEDLKA. Residues 91 to 100 are compositionally biased toward polar residues; it reads IATSEVSSQL. Residues 105 to 115 show a composition bias toward basic and acidic residues; it reads SDKTLSEDLKA.

This sequence belongs to the SpoVG family.

Its function is as follows. Could be involved in septation. The chain is Putative septation protein SpoVG from Macrococcus caseolyticus (strain JCSC5402) (Macrococcoides caseolyticum).